Reading from the N-terminus, the 338-residue chain is Calcium uniporter protein 4, mitochondrial (338 aa).

The N-terminal 36 residues, 1 to 36, are a transit peptide targeting the mitochondrion; sequence MVMMKKLLSNRLFNMSKTASQSLMNCRTSSSSSLAM. A helical membrane pass occupies residues 233–253; the sequence is LWAGLGYLIIQTAGFMRLTFW. The Selectivity filter signature appears at 257–265; sequence WDVMEPICF. Glu-261 contributes to the Ca(2+) binding site. A helical membrane pass occupies residues 263–280; the sequence is ICFYVSSVYFMAGYTFFL.

Belongs to the MCU (TC 1.A.77) family.

The protein localises to the mitochondrion inner membrane. It catalyses the reaction Ca(2+)(in) = Ca(2+)(out). In terms of biological role, mitochondrial inner membrane calcium uniporter that mediates calcium uptake into mitochondria. Constitutes a pore-forming and calcium-conducting subunit. Mitochondrial calcium homeostasis plays key roles in cellular physiology and regulates cell bioenergetics, cytoplasmic calcium signals and activation of cell death pathways. The sequence is that of Calcium uniporter protein 4, mitochondrial from Arabidopsis thaliana (Mouse-ear cress).